The sequence spans 242 residues: Alpha-aspartyl dipeptidase (242 aa).

Active-site charge relay system residues include S125, D140, and H162.

It belongs to the peptidase S51 family.

The protein localises to the cytoplasm. It carries out the reaction Dipeptidase E catalyzes the hydrolysis of dipeptides Asp-|-Xaa. It does not act on peptides with N-terminal Glu, Asn or Gln, nor does it cleave isoaspartyl peptides.. Functionally, hydrolyzes dipeptides containing N-terminal aspartate residues. This is Alpha-aspartyl dipeptidase (aad-a) from Xenopus laevis (African clawed frog).